The following is a 181-amino-acid chain: Adenylate kinase (181 aa).

10-15 contributes to the ATP binding site; it reads GAGKGT. The tract at residues 30–59 is NMP; the sequence is STGELFRRNIEKDTKLGHEAKKYLDAGDLV. Residues threonine 31, arginine 36, 57–59, 85–88, and glutamine 92 each bind AMP; these read DLV and GYPR. Residues 126-132 form an LID region; the sequence is GRGRADD. Arginine 127 is an ATP binding site. AMP is bound by residues arginine 129 and arginine 140. Glycine 166 is a binding site for ATP.

Belongs to the adenylate kinase family. As to quaternary structure, monomer.

The protein resides in the cytoplasm. The enzyme catalyses AMP + ATP = 2 ADP. It functions in the pathway purine metabolism; AMP biosynthesis via salvage pathway; AMP from ADP: step 1/1. Catalyzes the reversible transfer of the terminal phosphate group between ATP and AMP. Plays an important role in cellular energy homeostasis and in adenine nucleotide metabolism. This is Adenylate kinase from Mycobacterium leprae (strain Br4923).